A 344-amino-acid chain; its full sequence is Ribosomal RNA large subunit methyltransferase Cfr (344 aa).

Glu90 acts as the Proton acceptor in catalysis. The region spanning 97–330 (KQGWESFCIS…ATVRTQFGSE (234 aa)) is the Radical SAM core domain. The cysteines at positions 104 and 335 are disulfide-linked. 3 residues coordinate [4Fe-4S] cluster: Cys111, Cys115, and Cys118. S-adenosyl-L-methionine is bound by residues 157 to 158 (GE), Ser188, 211 to 213 (SLH), and Asn292. Cys335 acts as the S-methylcysteine intermediate in catalysis.

Belongs to the radical SAM superfamily. RlmN family. Cfr subfamily. [4Fe-4S] cluster serves as cofactor.

It is found in the cytoplasm. The enzyme catalyses adenosine(2503) in 23S rRNA + 2 reduced [2Fe-2S]-[ferredoxin] + 2 S-adenosyl-L-methionine = 8-methyladenosine(2503) in 23S rRNA + 5'-deoxyadenosine + L-methionine + 2 oxidized [2Fe-2S]-[ferredoxin] + S-adenosyl-L-homocysteine. In terms of biological role, specifically methylates position 8 of adenine 2503 in 23S rRNA. Confers resistance to some classes of antibiotics. The polypeptide is Ribosomal RNA large subunit methyltransferase Cfr (Clostridium botulinum (strain Loch Maree / Type A3)).